A 247-amino-acid chain; its full sequence is Protein LIFEGUARD 4 (247 aa).

Transmembrane regions (helical) follow at residues V42–F62, A75–Y95, Y105–F125, V130–F150, F165–L185, I188–D208, and I222–I242.

It belongs to the BI1 family.

It is found in the membrane. The protein is Protein LIFEGUARD 4 of Arabidopsis thaliana (Mouse-ear cress).